The chain runs to 212 residues: uncharacterized protein (212 aa).

Residues 11–31 (NLIFFQFIVYFFFISLTILII) traverse the membrane as a helical segment.

It is found in the membrane. This is an uncharacterized protein from Rickettsia prowazekii (strain Madrid E).